Consider the following 285-residue polypeptide: HTH-type transcriptional regulator MurR (285 aa).

The 77-residue stretch at 1–77 folds into the HTH rpiR-type domain; that stretch reads MLYLTKISNA…MALIGEYSAS (77 aa). A DNA-binding region (H-T-H motif) is located at residues 37–56; sequence SRQMAKQLGISQSSIVKFAQ. Residues 128-268 enclose the SIS domain; the sequence is IIEVISKAPF…FVGLVQLNDV (141 aa).

As to quaternary structure, homotetramer.

It participates in amino-sugar metabolism; N-acetylmuramate degradation [regulation]. Its function is as follows. Represses the expression of the murPQ operon involved in the uptake and degradation of N-acetylmuramic acid (MurNAc). Binds to two adjacent inverted repeats within the operator region. MurNAc 6-phosphate, the substrate of MurQ, is the specific inducer that weakens binding of MurR to the operator. The polypeptide is HTH-type transcriptional regulator MurR (Escherichia coli O139:H28 (strain E24377A / ETEC)).